Reading from the N-terminus, the 356-residue chain is GTPase Obg (356 aa).

Residues 1 to 159 form the Obg domain; sequence MKFLDEAKVY…RWIWLRMKLI (159 aa). In terms of domain architecture, OBG-type G spans 160–327; sequence ADAGLVGLPN…ALRKLADVVG (168 aa). GTP is bound by residues 166-173, 191-195, 212-215, 279-282, and 308-310; these read GLPNAGKS, FTTLH, DIPG, NKID, and SGA. Mg(2+) contacts are provided by Ser173 and Thr193. A disordered region spans residues 327-356; that stretch reads GEQPVSSKAKNAVESAATEEPWAAPVPPQG.

The protein belongs to the TRAFAC class OBG-HflX-like GTPase superfamily. OBG GTPase family. As to quaternary structure, monomer. The cofactor is Mg(2+).

It localises to the cytoplasm. An essential GTPase which binds GTP, GDP and possibly (p)ppGpp with moderate affinity, with high nucleotide exchange rates and a fairly low GTP hydrolysis rate. Plays a role in control of the cell cycle, stress response, ribosome biogenesis and in those bacteria that undergo differentiation, in morphogenesis control. The chain is GTPase Obg from Bradyrhizobium sp. (strain ORS 278).